The primary structure comprises 453 residues: uncharacterized protein (453 aa).

The signal sequence occupies residues 1–23; the sequence is MFLLQRFFIYGLFLACFYTTVFG. The Lumenal portion of the chain corresponds to 24-137; it reads EKHFEAEEYR…EKQFSYSSGT (114 aa). The chain crosses the membrane as a helical span at residues 138–158; the sequence is NGILATFLTAIPPNIFILLVP. Over 159 to 165 the chain is Cytoplasmic; the sequence is KSFDTSM. Residues 166–186 form a helical membrane-spanning segment; the sequence is LNLFVAVSAGSLLGDVFLQLL. At 187-194 the chain is on the lumenal side; sequence PTVYSTNG. A helical transmembrane segment spans residues 195-215; sequence GDFPASSVYSILIGALVFFLM. The Cytoplasmic segment spans residues 216 to 358; it reads DKGIRILIHE…LRNGYTKSQV (143 aa). Residues 229–238 are compositionally biased toward basic and acidic residues; the sequence is SLSKPKKDGE. The disordered stretch occupies residues 229–278; it reads SLSKPKKDGEETSSVNKPSASSTQTDVKGVEGLRKRNVKDDQNSKGHEPD. Residues 240 to 254 show a composition bias toward polar residues; it reads TSSVNKPSASSTQTD. A compositionally biased stretch (basic and acidic residues) spans 256–278; that stretch reads KGVEGLRKRNVKDDQNSKGHEPD. A helical membrane pass occupies residues 359 to 379; it reads LVLQMITMVTGLLGAIVATYI. At 380–399 the chain is on the lumenal side; that stretch reads YTASSSSSPYGSFLLQLEDK. Residues 400–420 traverse the membrane as a helical segment; sequence LLPFTAGGFLYIAYLGVFPEL. Residues 421 to 432 lie on the Cytoplasmic side of the membrane; the sequence is LEINLSKGKLGN. The chain crosses the membrane as a helical span at residues 433 to 453; sequence MIYTALYMMFIVGGFSFLYYV.

Belongs to the ZIP transporter (TC 2.A.5) family. KE4/Catsup subfamily.

The protein resides in the endoplasmic reticulum membrane. This is an uncharacterized protein from Schizosaccharomyces pombe (strain 972 / ATCC 24843) (Fission yeast).